The chain runs to 832 residues: MSLTASAASAALTLLADGPDDGSKRPWRPNDPVKEQRDLYTQFVISTALGLSAFLAFCILRPKWTELYAARRRQRNAASRLPELPDTLFGWIPVLHQITEEEVLQSAGLDAYVFLSFFKFAIRFLLAVFIFAVAIILPMHYKYTGQYGVPGWDNPPGNKTTSPIDGSEKEKPVTDPAYLWIYVLFAYVFSGLAIYMLLDETKVIIRTRQTYLGNQTSTTDRTIRLSGIPHDLGTEDKIKEFVEGLRVGKVESITVCRKWRELDELIDERMKVIRELERAWTKHIGYKRPKNDGNALPLTEQQPRDADDERSGLLSGHDNEHVSGYSNERPKVRIWYGLFKLRFRMIDAIDYYEEKLRKIDEYIQNAREKEYRTTEIAFVTMESIAASQMLVQAILDPHPMQMFARLAPAPADVIWKNTYLSRTRRMVQSWSITFVIGFLTVFWSVLLVPIASLLELKTLETIVPRLAEFLQEHPIIKSLVQTGLPTLAFSLLTVAVPYLYEWLSNNQGMVSRGDVELSVISKNFFFSFFNLFLLFTVFGTASGFYGFWESLRDAFKDSTTIALALANSLEGLAPFYINLLILQGLGLFPFRLLEFGSVALYPFQFLSARTPREYAELSTPPKFSYGFSIPQTILILVICVVYSVFPSSWLICLFGLIYFTVGKFIYKYQLLYAMDHQQHSTGRAWPMICNRVFVGLLVHQLAMIGVLALRRAITRSLLLVPLLGFTVWFSYWFGRTYEPLMKFIALKSINRDQPGGGDISPSPSSTLSPPSGLDRDSLPIRIGGQDLELRLKKYVNPSLIVPLHAAWLPGRNPARGNGNGASAFEVHQTQNV.

A run of 2 helical transmembrane segments spans residues 39–59 (LYTQ…AFCI) and 117–137 (FFKF…AIIL). The segment at 152-171 (WDNPPGNKTTSPIDGSEKEK) is disordered. Residue Asn158 is glycosylated (N-linked (GlcNAc...) asparagine). Residues 178 to 198 (YLWIYVLFAYVFSGLAIYMLL) form a helical membrane-spanning segment. N-linked (GlcNAc...) asparagine glycosylation occurs at Asn214. Positions 291–322 (NDGNALPLTEQQPRDADDERSGLLSGHDNEHV) are disordered. Residues 302-321 (QPRDADDERSGLLSGHDNEH) show a composition bias toward basic and acidic residues. The next 9 membrane-spanning stretches (helical) occupy residues 434 to 454 (FVIG…ASLL), 483 to 503 (GLPT…YEWL), 524 to 544 (FFFS…ASGF), 560 to 582 (TIAL…LLIL), 587 to 608 (LFPF…FLSA), 623 to 645 (FSYG…YSVF), 650 to 672 (LICL…QLLY), 687 to 707 (MICN…IGVL), and 713 to 733 (ITRS…SYWF). The segment at 754 to 777 (PGGGDISPSPSSTLSPPSGLDRDS) is disordered. Residues 759-771 (ISPSPSSTLSPPS) are compositionally biased toward low complexity.

The protein belongs to the CSC1 (TC 1.A.17) family.

It is found in the vacuole membrane. In terms of biological role, vacuolar transmembrane transporter that participates in the first stage of the beta-lactam biosynthesis (the formation of the ACV tripeptide), probably taking part in the supply of amino acids from the vacuolar lumen to the vacuole-anchored ACV synthetase. This Penicillium rubens (strain ATCC 28089 / DSM 1075 / NRRL 1951 / Wisconsin 54-1255) (Penicillium chrysogenum) protein is Vacuolar transmembrane transporter penV.